Here is a 275-residue protein sequence, read N- to C-terminus: Methylthioribulose-1-phosphate dehydratase (275 aa).

Cys-125 contacts substrate. His-143 and His-145 together coordinate Zn(2+). Glu-168 serves as the catalytic Proton donor/acceptor. His-233 is a binding site for Zn(2+).

The protein belongs to the aldolase class II family. MtnB subfamily. Zn(2+) is required as a cofactor.

It localises to the cytoplasm. It carries out the reaction 5-(methylsulfanyl)-D-ribulose 1-phosphate = 5-methylsulfanyl-2,3-dioxopentyl phosphate + H2O. The protein operates within amino-acid biosynthesis; L-methionine biosynthesis via salvage pathway; L-methionine from S-methyl-5-thio-alpha-D-ribose 1-phosphate: step 2/6. Functionally, catalyzes the dehydration of methylthioribulose-1-phosphate (MTRu-1-P) into 2,3-diketo-5-methylthiopentyl-1-phosphate (DK-MTP-1-P). In Lodderomyces elongisporus (strain ATCC 11503 / CBS 2605 / JCM 1781 / NBRC 1676 / NRRL YB-4239) (Yeast), this protein is Methylthioribulose-1-phosphate dehydratase.